A 112-amino-acid chain; its full sequence is Putative membrane protein insertion efficiency factor (112 aa).

It belongs to the UPF0161 family.

The protein localises to the cell inner membrane. Functionally, could be involved in insertion of integral membrane proteins into the membrane. The polypeptide is Putative membrane protein insertion efficiency factor (Bradyrhizobium diazoefficiens (strain JCM 10833 / BCRC 13528 / IAM 13628 / NBRC 14792 / USDA 110)).